A 510-amino-acid chain; its full sequence is Cytochrome P450 90D2 (510 aa).

Residues 6 to 26 (MVGSGGVYSWPAALLVAAIVV) traverse the membrane as a helical segment. Cysteine 444 serves as a coordination point for heme.

It belongs to the cytochrome P450 family. Heme serves as cofactor.

It localises to the membrane. The enzyme catalyses 3-epi-6-deoxocathasterone + reduced [NADPH--hemoprotein reductase] + O2 = 6-deoxotyphasterol + oxidized [NADPH--hemoprotein reductase] + H2O + H(+). It catalyses the reaction (22S,24R)-22-hydroxy-5alpha-ergostan-3-one + reduced [NADPH--hemoprotein reductase] + O2 = 3-dehydro-6-deoxoteasterone + oxidized [NADPH--hemoprotein reductase] + H2O + H(+). It carries out the reaction 6-deoxycathasterone + reduced [NADPH--hemoprotein reductase] + O2 = 6-deoxoteasterone + oxidized [NADPH--hemoprotein reductase] + H2O + H(+). It participates in plant hormone biosynthesis; brassinosteroid biosynthesis. Involved in reduction steps of the biosynthesis of plant campesterol-derivative steroids, ending to castasterone (CS) but missing brassinolide (BL). Catalyzes the conversion of (22S,24R)-22-hydroxy-5alpha-ergostan-3-one (22-hydroxy-campesta-3-one, 22-OH-3-one) to 3-dehydro-6-deoxoteasterone (6-deoxo3DT, 6-deoxo-3-DHT), 3-epi-6-deoxocathasterone (3-epi-6-deoxoCT) to 6-deoxotyphasterol (6-deoxoTY) and of 6-deoxocathasterone (6-deoxoCT) to 6-deoxoteasterone (6-deoxoTE). The polypeptide is Cytochrome P450 90D2 (Brachypodium distachyon (Purple false brome)).